The primary structure comprises 346 residues: Uroporphyrinogen decarboxylase (346 aa).

Substrate-binding positions include 26-30 (RQAGR), aspartate 76, tyrosine 153, serine 208, and histidine 323.

Belongs to the uroporphyrinogen decarboxylase family. As to quaternary structure, homodimer.

Its subcellular location is the cytoplasm. The enzyme catalyses uroporphyrinogen III + 4 H(+) = coproporphyrinogen III + 4 CO2. It functions in the pathway porphyrin-containing compound metabolism; protoporphyrin-IX biosynthesis; coproporphyrinogen-III from 5-aminolevulinate: step 4/4. Its function is as follows. Catalyzes the decarboxylation of four acetate groups of uroporphyrinogen-III to yield coproporphyrinogen-III. This Prochlorococcus marinus (strain MIT 9301) protein is Uroporphyrinogen decarboxylase.